We begin with the raw amino-acid sequence, 379 residues long: Alanine racemase (379 aa).

Lysine 37 serves as the catalytic Proton acceptor; specific for D-alanine. N6-(pyridoxal phosphate)lysine is present on lysine 37. Arginine 137 contacts substrate. The Proton acceptor; specific for L-alanine role is filled by tyrosine 269. Methionine 317 is a binding site for substrate.

It belongs to the alanine racemase family. Requires pyridoxal 5'-phosphate as cofactor.

It carries out the reaction L-alanine = D-alanine. Its pathway is amino-acid biosynthesis; D-alanine biosynthesis; D-alanine from L-alanine: step 1/1. Its function is as follows. Catalyzes the interconversion of L-alanine and D-alanine. May also act on other amino acids. This chain is Alanine racemase (alr), found in Geobacter sp. (strain M21).